Consider the following 435-residue polypeptide: Xylose isomerase (435 aa).

Active-site residues include histidine 100 and aspartate 103. Mg(2+) is bound by residues glutamate 231, glutamate 267, histidine 270, aspartate 295, aspartate 306, aspartate 308, and aspartate 338.

Belongs to the xylose isomerase family. In terms of assembly, homotetramer. Requires Mg(2+) as cofactor.

It localises to the cytoplasm. It catalyses the reaction alpha-D-xylose = alpha-D-xylulofuranose. The sequence is that of Xylose isomerase from Brucella suis (strain ATCC 23445 / NCTC 10510).